The sequence spans 366 residues: Fe-S cluster assembly protein DRE2 (366 aa).

Positions 8 to 167 (AQGSGRFLLL…KPDFGAQQAV (160 aa)) are N-terminal SAM-like domain. Positions 100–136 (RNRDNQIWGSGSDSAAGLGSSDGGGGGGGGEKKSSSE) are disordered. Over residues 108-118 (GSGSDSAAGLG) the composition is skewed to low complexity. The span at 119–128 (SSDGGGGGGG) shows a compositional bias: gly residues. A linker region spans residues 168–258 (PLKLGRKKNL…EEELLGEFDM (91 aa)). [2Fe-2S] cluster-binding residues include cysteine 268, cysteine 279, cysteine 282, and cysteine 284. A fe-S binding site A region spans residues 268–284 (CRPKAGKRRRACKDCTC). 4 residues coordinate [4Fe-4S] cluster: cysteine 329, cysteine 332, cysteine 340, and cysteine 343. 2 consecutive short sequence motifs (cx2C motif) follow at residues 329–332 (CGNC) and 340–343 (CDGC). Residues 329–343 (CGNCALGDAFRCDGC) are fe-S binding site B.

Belongs to the anamorsin family. As to quaternary structure, monomer. Interacts with TAH18. Interacts with MIA40. [2Fe-2S] cluster serves as cofactor. The cofactor is [4Fe-4S] cluster.

It localises to the cytoplasm. It is found in the mitochondrion intermembrane space. Functionally, component of the cytosolic iron-sulfur (Fe-S) protein assembly (CIA) machinery required for the maturation of extramitochondrial Fe-S proteins. Part of an electron transfer chain functioning in an early step of cytosolic Fe-S biogenesis, facilitating the de novo assembly of a [4Fe-4S] cluster on the scaffold complex CFD1-NBP35. Electrons are transferred to DRE2 from NADPH via the FAD- and FMN-containing protein TAH18. TAH18-DRE2 are also required for the assembly of the diferric tyrosyl radical cofactor of ribonucleotide reductase (RNR), probably by providing electrons for reduction during radical cofactor maturation in the catalytic small subunit RNR2. The polypeptide is Fe-S cluster assembly protein DRE2 (Paracoccidioides lutzii (strain ATCC MYA-826 / Pb01) (Paracoccidioides brasiliensis)).